Reading from the N-terminus, the 374-residue chain is Protein-glutamate methylesterase/protein-glutamine glutaminase (374 aa).

In terms of domain architecture, Response regulatory spans 4–121 (KVLVVDDSGF…SRNPDKVKQM (118 aa)). D55 bears the 4-aspartylphosphate mark. The tract at residues 144–186 (PVAAPVPASSPAPASSFASPAPARPAATARAAAPAASHSPAPK) is disordered. Residues 154–183 (PAPASSFASPAPARPAATARAAAPAASHSP) are compositionally biased toward low complexity. The 192-residue stretch at 183 to 374 (PAPKRKPYKL…IGKHLVEACV (192 aa)) folds into the CheB-type methylesterase domain. Catalysis depends on residues S198, H225, and D318.

It belongs to the CheB family. Post-translationally, phosphorylated by CheA. Phosphorylation of the N-terminal regulatory domain activates the methylesterase activity.

The protein localises to the cytoplasm. It carries out the reaction [protein]-L-glutamate 5-O-methyl ester + H2O = L-glutamyl-[protein] + methanol + H(+). The enzyme catalyses L-glutaminyl-[protein] + H2O = L-glutamyl-[protein] + NH4(+). Its function is as follows. Involved in chemotaxis. Part of a chemotaxis signal transduction system that modulates chemotaxis in response to various stimuli. Catalyzes the demethylation of specific methylglutamate residues introduced into the chemoreceptors (methyl-accepting chemotaxis proteins or MCP) by CheR. Also mediates the irreversible deamidation of specific glutamine residues to glutamic acid. This Pseudomonas putida (Arthrobacter siderocapsulatus) protein is Protein-glutamate methylesterase/protein-glutamine glutaminase.